The following is a 67-amino-acid chain: Large ribosomal subunit protein uL29 (67 aa).

Belongs to the universal ribosomal protein uL29 family.

This is Large ribosomal subunit protein uL29 from Staphylothermus marinus (strain ATCC 43588 / DSM 3639 / JCM 9404 / F1).